Reading from the N-terminus, the 194-residue chain is Probable thymidylate kinase (194 aa).

Residue 8–15 (GIDGSGKT) coordinates ATP.

This sequence belongs to the thymidylate kinase family.

It catalyses the reaction dTMP + ATP = dTDP + ADP. The protein is Probable thymidylate kinase of Sulfolobus acidocaldarius (strain ATCC 33909 / DSM 639 / JCM 8929 / NBRC 15157 / NCIMB 11770).